The chain runs to 293 residues: Glutamyl-Q tRNA(Asp) synthetase (293 aa).

Residues 8–12 (RFAPS) and Glu-44 contribute to the L-glutamate site. A 'HIGH' region motif is present at residues 11–21 (PSPSGPLHAGS). Zn(2+)-binding residues include Cys-98, Cys-100, Tyr-120, and Cys-124. Residues Tyr-183 and Arg-201 each coordinate L-glutamate. The 'KMSKS' region signature appears at 239–243 (KLSKQ). Residue Lys-242 participates in ATP binding.

The protein belongs to the class-I aminoacyl-tRNA synthetase family. GluQ subfamily. Zn(2+) serves as cofactor.

Its function is as follows. Catalyzes the tRNA-independent activation of glutamate in presence of ATP and the subsequent transfer of glutamate onto a tRNA(Asp). Glutamate is transferred on the 2-amino-5-(4,5-dihydroxy-2-cyclopenten-1-yl) moiety of the queuosine in the wobble position of the QUC anticodon. This chain is Glutamyl-Q tRNA(Asp) synthetase, found in Janthinobacterium sp. (strain Marseille) (Minibacterium massiliensis).